Consider the following 439-residue polypeptide: Xylose isomerase (439 aa).

Residues histidine 101 and aspartate 104 contribute to the active site. Glutamate 232, glutamate 268, histidine 271, aspartate 296, aspartate 307, aspartate 309, and aspartate 339 together coordinate Mg(2+).

The protein belongs to the xylose isomerase family. In terms of assembly, homotetramer. The cofactor is Mg(2+).

The protein resides in the cytoplasm. The catalysed reaction is alpha-D-xylose = alpha-D-xylulofuranose. This Serratia proteamaculans (strain 568) protein is Xylose isomerase.